We begin with the raw amino-acid sequence, 223 residues long: Neurotrophic factor BDNF precursor form (223 aa).

A signal peptide spans 1–5; it reads SCMKA. Positions 6 to 114 are excised as a propeptide; sequence APMKEVSIRG…AANMSMRVRR (109 aa). Residue N107 is glycosylated (N-linked (GlcNAc...) asparagine). Cystine bridges form between C127/C194 and C172/C223.

The protein belongs to the NGF-beta family.

It localises to the secreted. Promotes the survival of neuronal populations that are all located either in the central nervous system or directly connected to it. The sequence is that of Neurotrophic factor BDNF precursor form (BDNF) from Eryx johnii (Indian red sand boa).